Reading from the N-terminus, the 482-residue chain is Mannan endo-1,4-beta-mannosidase (482 aa).

The first 21 residues, 1 to 21 (MARTLRYLLCGILALAAGSNA), serve as a signal peptide directing secretion. The 119-residue stretch at 42-160 (TTYEAEDAIL…WYLVDSITLT (119 aa)) folds into the CBM6 domain. 2 N-linked (GlcNAc...) asparagine glycosylation sites follow: Asn171 and Asn300. The region spanning 181-474 (ASARALYDYL…YTSDYVLTLD (294 aa)) is the GH26 domain. Glu332 serves as the catalytic Proton donor. Glu422 functions as the Nucleophile in the catalytic mechanism.

This sequence belongs to the glycosyl hydrolase 26 family.

The protein resides in the secreted. Its activity is regulated as follows. The activity is completely impaired by Ag(+), partially inhibited by Zn(2+), and enhanced by Co(2+), Ni(2+) and Cu(2+) by 22.6, 14.5 and 20.8 %, respectively. Ca(2+), Na(+), Mg(2+), Mn(2+), urea and EDTA do not significantly affect the mannanase activity. Mannan endo-1,4-beta-mannosidase that exhibits high activity against konjac glucomannan and carob galactomannan, as well as a lower activity toward beta-mannan. Shows no activity against barley beta-glucan, birchwood xylan, and low viscosity carboxymethyl cellulose (CMC). Has the ability to hydrolyze manno-oligosaccharides such as M4 which is degraded slightly to M3 and M1, M5 which is mainly degraded to M4 and M1, and M6 which is mostly hydrolyzed to M4 and M2. Shows no activity toward M2 and M3 manno-oligosaccharides. This is Mannan endo-1,4-beta-mannosidase from Thermothelomyces thermophilus (strain ATCC 42464 / BCRC 31852 / DSM 1799) (Sporotrichum thermophile).